The following is an 800-amino-acid chain: DNA topoisomerase 4 subunit A (800 aa).

Residues L31–E495 form the Topo IIA-type catalytic domain. The active-site O-(5'-phospho-DNA)-tyrosine intermediate is Y119.

This sequence belongs to the type II topoisomerase GyrA/ParC subunit family. ParC type 2 subfamily. Heterotetramer composed of ParC and ParE.

Its subcellular location is the cell membrane. The enzyme catalyses ATP-dependent breakage, passage and rejoining of double-stranded DNA.. In terms of biological role, topoisomerase IV is essential for chromosome segregation. It relaxes supercoiled DNA. Performs the decatenation events required during the replication of a circular DNA molecule. This is DNA topoisomerase 4 subunit A from Staphylococcus aureus (strain NCTC 8325 / PS 47).